A 76-amino-acid polypeptide reads, in one-letter code: uncharacterized protein (76 aa).

This is an uncharacterized protein from African swine fever virus (isolate Tick/Malawi/Lil 20-1/1983) (ASFV).